A 161-amino-acid polypeptide reads, in one-letter code: Peroxynitrite isomerase 2 (161 aa).

The GXWXGXG motif lies at 17–23 (GTWAGQG). Histidine 152 is a binding site for heme b.

It belongs to the nitrobindin family. Homodimer. The cofactor is heme b.

The catalysed reaction is peroxynitrite = nitrate. The protein operates within nitrogen metabolism. Its function is as follows. Heme-binding protein able to scavenge peroxynitrite and to protect free L-tyrosine against peroxynitrite-mediated nitration, by acting as a peroxynitrite isomerase that converts peroxynitrite to nitrate. Therefore, this protein likely plays a role in peroxynitrite sensing and in the detoxification of reactive nitrogen and oxygen species (RNS and ROS, respectively). Is able to bind nitric oxide (NO) in vitro, but may act as a sensor of peroxynitrite levels in vivo. The sequence is that of Peroxynitrite isomerase 2 from Mycobacterium marinum (strain ATCC BAA-535 / M).